Consider the following 651-residue polypeptide: Probable potassium transport system protein Kup 3 (651 aa).

The next 12 helical transmembrane spans lie at 38-58 (FWALTLGGIGVVFGDIGTSPL), 77-97 (VLVLGVLSLILWALLIVVTAK), 129-149 (LFLLVLGVIGASMFIGDSMIT), 166-186 (PALEHYVVPLTVLVLVLLFGV), 197-217 (FFGPVMLVWFATLAAMGAMHI), 242-262 (IGLVTLGAVFLAVTGGEALYA), 276-296 (WLGFVLPALLINYFGQGALVL), 314-334 (LVLPLTLMATAATVIASQAVI), 366-386 (IYLPRVNALLLIGVLLLVLLF), 396-416 (YGIAVSTTMVVDGIMGFVVIW), 421-441 (WSWPAAALVILPLVLVDAMFF), and 448-468 (LLDGAWVPLLFGLAMAVVIWT).

It belongs to the HAK/KUP transporter (TC 2.A.72) family.

It localises to the cell inner membrane. It carries out the reaction K(+)(in) + H(+)(in) = K(+)(out) + H(+)(out). Transport of potassium into the cell. Likely operates as a K(+):H(+) symporter. This chain is Probable potassium transport system protein Kup 3, found in Rhodopseudomonas palustris (strain ATCC BAA-98 / CGA009).